The following is a 481-amino-acid chain: Proline--tRNA ligase (481 aa).

It belongs to the class-II aminoacyl-tRNA synthetase family. ProS type 3 subfamily. Homodimer.

The protein localises to the cytoplasm. It catalyses the reaction tRNA(Pro) + L-proline + ATP = L-prolyl-tRNA(Pro) + AMP + diphosphate. Its function is as follows. Catalyzes the attachment of proline to tRNA(Pro) in a two-step reaction: proline is first activated by ATP to form Pro-AMP and then transferred to the acceptor end of tRNA(Pro). The chain is Proline--tRNA ligase from Chloroherpeton thalassium (strain ATCC 35110 / GB-78).